Consider the following 1165-residue polypeptide: Error-prone DNA polymerase (1165 aa).

The disordered stretch occupies residues 1111-1165 (SEGLARPPLPTGADLYEPLTYEPLNGDRRDNPDAPAQRLRHPRDVRILPPSRDFH). Residues 1152-1165 (PRDVRILPPSRDFH) are compositionally biased toward basic and acidic residues.

It belongs to the DNA polymerase type-C family. DnaE2 subfamily.

Its subcellular location is the cytoplasm. The catalysed reaction is DNA(n) + a 2'-deoxyribonucleoside 5'-triphosphate = DNA(n+1) + diphosphate. Functionally, DNA polymerase involved in damage-induced mutagenesis and translesion synthesis (TLS). It is not the major replicative DNA polymerase. This Rhodopseudomonas palustris (strain HaA2) protein is Error-prone DNA polymerase.